Here is a 315-residue protein sequence, read N- to C-terminus: Methionyl-tRNA formyltransferase (315 aa).

113–116 serves as a coordination point for (6S)-5,6,7,8-tetrahydrofolate; that stretch reads SILP.

It belongs to the Fmt family.

It carries out the reaction L-methionyl-tRNA(fMet) + (6R)-10-formyltetrahydrofolate = N-formyl-L-methionyl-tRNA(fMet) + (6S)-5,6,7,8-tetrahydrofolate + H(+). Attaches a formyl group to the free amino group of methionyl-tRNA(fMet). The formyl group appears to play a dual role in the initiator identity of N-formylmethionyl-tRNA by promoting its recognition by IF2 and preventing the misappropriation of this tRNA by the elongation apparatus. This chain is Methionyl-tRNA formyltransferase, found in Aliivibrio fischeri (strain MJ11) (Vibrio fischeri).